A 370-amino-acid polypeptide reads, in one-letter code: UPF0284 protein PCC7424_2681 (370 aa).

Belongs to the UPF0284 family.

This Gloeothece citriformis (strain PCC 7424) (Cyanothece sp. (strain PCC 7424)) protein is UPF0284 protein PCC7424_2681.